The sequence spans 696 residues: MKWSAAAGAALLALPANSAVTASLPLKLETRSSLNSRLSNIHVERSASVEGAISYTYGSCQAKREEEAHHSISQPTDAHHDRLVWVIPENVQSGGCISAWSRANGRLVGRSRPQSFDFKSIKMRRDLKARATKPSDSVAIHMTTDNGINPWGPWFDGVKLLEDKEISTVDVEKAKSKNIAIVGAGMSGLMTYLCLTQAGMTNVSIIEGGNRLGGRVHTEYLSGGPFDYSYQEMGPMRFPNTITLGNETYNVSDHQLVFQLAEEMNSLNGHSKNLSVDFIPWYQSNSNGLYYYDGIKNPETGLPPTLAELAANSSLALTRVSNNSTKSLSQKVDAFLPDTDKFFAEMAQNMFKAHADWLSGGLAGLPGDQWSEFGFMVNYLRGSLNDTAFLSASAHSYWDTLYEGMYFSASTWKTIDGGLNRLPLSFHPLVDNATTLNRRVERVAFDAETQKVTLHSRNSYKDSFESSEHDYAVIAAPFSIVKKWRFSPALDLTAPTLANAIQNLEYTSACKVALEFRTRFWEHLPQPIYGSCSTTSDIPGIGSICYPSYNINGTDGPASILASYISGADWGDRWVSTPEEEHVQYVLNAMAEIHGEELVKEQYTGQFNRRCWALDPLESASWASPTVGQHELYLPEYFQTRNNLVFVGEHTSYTHAWIASALESGIRGSVQLLLELGLVDEAKATVDKWMARWIDV.

Positions 1 to 130 (MKWSAAAGAA…IKMRRDLKAR (130 aa)) are excised as a propeptide. FAD is bound by residues Glu-207, Arg-215, 236 to 237 (MR), and Val-440. Arg-237 contacts substrate. Tyr-564 is a binding site for substrate. FAD contacts are provided by residues Glu-649 and 658 to 661 (IASA).

It belongs to the flavin monoamine oxidase family. FAD is required as a cofactor.

The catalysed reaction is an L-alpha-amino acid + O2 + H2O = a 2-oxocarboxylate + H2O2 + NH4(+). The protein is L-amino-acid oxidase (lox) of Neurospora crassa (strain ATCC 24698 / 74-OR23-1A / CBS 708.71 / DSM 1257 / FGSC 987).